The following is a 126-amino-acid chain: Glycerol dehydrogenase small subunit (126 aa).

4 helical membrane passes run 13–33, 41–61, 67–87, and 92–112; these read WLTL…VIGG, GSTY…FMLM, AFLY…EVGF, and LLPR…TIPV.

The protein resides in the cell membrane. The catalysed reaction is glycerol + A = dihydroxyacetone + AH2. Catalyzes the oxidation of glycerol to glycerone. Also acts, more slowly, on a number of other polyols including D-sorbitol, D-arabinitol, D-mannitol, meso-erythritol, adonitol and propylene glycol. This Gluconobacter thailandicus protein is Glycerol dehydrogenase small subunit (sldB).